A 591-amino-acid polypeptide reads, in one-letter code: V-type ATP synthase alpha chain (591 aa).

233–240 (GPFGAGKT) lines the ATP pocket.

It belongs to the ATPase alpha/beta chains family.

It catalyses the reaction ATP + H2O + 4 H(+)(in) = ADP + phosphate + 5 H(+)(out). Its function is as follows. Produces ATP from ADP in the presence of a proton gradient across the membrane. The V-type alpha chain is a catalytic subunit. This is V-type ATP synthase alpha chain from Streptococcus pneumoniae (strain ATCC 700669 / Spain 23F-1).